The following is a 364-amino-acid chain: uncharacterized protein (364 aa).

A compositionally biased stretch (acidic residues) spans 1–17 (MEPGELMEVDTSQELDE). The interval 1-61 (MEPGELMEVD…EEDQSSTETM (61 aa)) is disordered. Over residues 19–31 (TSAKETDQPKDAQ) the composition is skewed to basic and acidic residues.

This is an uncharacterized protein from Caenorhabditis elegans.